Here is a 414-residue protein sequence, read N- to C-terminus: Serine hydroxymethyltransferase (414 aa).

(6S)-5,6,7,8-tetrahydrofolate contacts are provided by residues leucine 121 and 125-127 (GHL). Position 229 is an N6-(pyridoxal phosphate)lysine (lysine 229).

Belongs to the SHMT family. As to quaternary structure, homodimer. Pyridoxal 5'-phosphate serves as cofactor.

Its subcellular location is the cytoplasm. It carries out the reaction (6R)-5,10-methylene-5,6,7,8-tetrahydrofolate + glycine + H2O = (6S)-5,6,7,8-tetrahydrofolate + L-serine. It participates in one-carbon metabolism; tetrahydrofolate interconversion. The protein operates within amino-acid biosynthesis; glycine biosynthesis; glycine from L-serine: step 1/1. In terms of biological role, catalyzes the reversible interconversion of serine and glycine with tetrahydrofolate (THF) serving as the one-carbon carrier. This reaction serves as the major source of one-carbon groups required for the biosynthesis of purines, thymidylate, methionine, and other important biomolecules. Also exhibits THF-independent aldolase activity toward beta-hydroxyamino acids, producing glycine and aldehydes, via a retro-aldol mechanism. This chain is Serine hydroxymethyltransferase, found in Thiobacillus denitrificans (strain ATCC 25259 / T1).